Reading from the N-terminus, the 60-residue chain is Metallothionein (60 aa).

M1 bears the N-acetylmethionine mark. The beta stretch occupies residues 1–28 (MDPCECSKTGTCNCGGSCTCKNCSCTTC). Residues C4, C6, C12, C14, C18, C20, C23, C25, C28, C32, C33, C35, C36, C40, C43, C47, C49, C54, C58, and C59 each coordinate a divalent metal cation. An alpha region spans residues 29–60 (NKSCCPCCPSGCPKCASGCVCKGKTCDTSCCQ).

It belongs to the metallothionein superfamily. Type 1 family.

In terms of biological role, metallothioneins have a high content of cysteine residues that bind various heavy metals. The protein is Metallothionein (mt) of Pleuronectes platessa (European plaice).